Here is an 81-residue protein sequence, read N- to C-terminus: Small cysteine-rich protein 6 (81 aa).

The first 23 residues, 1 to 23 (MDTKVACLLLIILGALTVQGAVS), serve as a signal peptide directing secretion. Residues 24 to 25 (GN) constitute a propeptide that is removed on maturation.

Belongs to the Cnidaria small cysteine-rich protein (SCRiP) family. beta subfamily. Contains 4 disulfide bonds.

The protein resides in the secreted. It localises to the nematocyst. Its function is as follows. Induces neurotoxic symptoms on zebrafish. Has also been claimed to be implied in calcification, but tests on homolog proteins suggest that proteins of this family have a neurotoxic function and not a calcification function. The protein is Small cysteine-rich protein 6 of Orbicella faveolata (Mountainous star coral).